A 229-amino-acid chain; its full sequence is Large ribosomal subunit protein uL3 (229 aa).

Gln151 is modified (N5-methylglutamine).

This sequence belongs to the universal ribosomal protein uL3 family. As to quaternary structure, part of the 50S ribosomal subunit. Forms a cluster with proteins L14 and L19. Post-translationally, methylated by PrmB.

Functionally, one of the primary rRNA binding proteins, it binds directly near the 3'-end of the 23S rRNA, where it nucleates assembly of the 50S subunit. In Paramagnetospirillum magneticum (strain ATCC 700264 / AMB-1) (Magnetospirillum magneticum), this protein is Large ribosomal subunit protein uL3.